The following is a 516-amino-acid chain: Propionyl-CoA carboxylase, carboxyltransferase subunit (516 aa).

The interval 1–32 (MTMEDRIDELREKREEALKGGGEDRIASQHDK) is disordered. Residues 3-259 (MEDRIDELRE…NNVEDPPRVE (257 aa)) enclose the CoA carboxyltransferase N-terminal domain. The region spanning 263-509 (DPERVADELE…KSKRKSQPDK (247 aa)) is the CoA carboxyltransferase C-terminal domain.

This sequence belongs to the AccD/PCCB family. As to quaternary structure, the propionyl coenzyme A carboxylase (PCC) complex is composed of three subunits: PccA (biotin carboxylase and biotin-carboxyl carrier), PccB (carboxyltransferase) and PccX.

It catalyses the reaction propanoyl-CoA + hydrogencarbonate + ATP = (S)-methylmalonyl-CoA + ADP + phosphate + H(+). It functions in the pathway metabolic intermediate metabolism; propanoyl-CoA degradation; succinyl-CoA from propanoyl-CoA: step 1/3. Its function is as follows. Part of the propionyl coenzyme A carboxylase (PCC) complex involved in propionate utilization and in the production of the poly(3-hydroxybutyrate-co-3-hydroxyvalerate)(PHBV), which is a water-insoluble biopolymer used as intracellular energy reserve material when cells grow under conditions of nutrient limitation. The complex catalyzes the carboxylation of propionyl-CoA to methylmalonyl-CoA. PCC is also able to catalyze the carboxylation of acetyl-CoA. In Haloferax mediterranei (strain ATCC 33500 / DSM 1411 / JCM 8866 / NBRC 14739 / NCIMB 2177 / R-4) (Halobacterium mediterranei), this protein is Propionyl-CoA carboxylase, carboxyltransferase subunit.